Here is a 189-residue protein sequence, read N- to C-terminus: Interferon alpha-10 (189 aa).

The first 23 residues, 1-23 (MALSFSLLMAVLVLSYKSICSLG), serve as a signal peptide directing secretion. Cystine bridges form between C24–C122 and C52–C162.

It belongs to the alpha/beta interferon family.

The protein resides in the secreted. Produced by macrophages, IFN-alpha have antiviral activities. Interferon stimulates the production of two enzymes: a protein kinase and an oligoadenylate synthetase. The polypeptide is Interferon alpha-10 (IFNA10) (Homo sapiens (Human)).